We begin with the raw amino-acid sequence, 279 residues long: Movement protein (279 aa).

The disordered stretch occupies residues 246-279 (SESEELNVESPPAAIGSSSASRSEAFRPQVVNGL). A compositionally biased stretch (low complexity) spans 254-268 (ESPPAAIGSSSASRS).

Belongs to the cucumovirus movement protein family.

The protein localises to the host cell junction. It localises to the host plasmodesma. Its function is as follows. Transports viral genome to neighboring plant cells directly through plasmosdesmata, without any budding. The movement protein allows efficient cell to cell propagation, by bypassing the host cell wall barrier. Acts by forming a tubular structure at the host plasmodesmata, enlarging it enough to allow free passage of virion capsids. The protein is Movement protein of Cucumber mosaic virus (strain CS) (CMV).